The following is a 412-amino-acid chain: DNA replication and repair protein RecF (412 aa).

30–37 provides a ligand contact to ATP; it reads GANGAGKT. The segment at 369–412 is disordered; sequence LQVRPGGGTAAVTPDPEYARGEATAANGAASAPTGADAASTSRD. Residues 389 to 412 are compositionally biased toward low complexity; it reads GEATAANGAASAPTGADAASTSRD.

Belongs to the RecF family.

It is found in the cytoplasm. Its function is as follows. The RecF protein is involved in DNA metabolism; it is required for DNA replication and normal SOS inducibility. RecF binds preferentially to single-stranded, linear DNA. It also seems to bind ATP. The chain is DNA replication and repair protein RecF from Salinibacter ruber (strain DSM 13855 / M31).